The sequence spans 345 residues: uncharacterized protein (345 aa).

Disordered regions lie at residues 1–24 (MGLE…ENRK) and 296–345 (MTAH…LNES). Residues 304 to 323 (SDYDNDDDTDGIINETDYEL) are compositionally biased toward acidic residues. The span at 324–345 (DTSQSEFATLTTSSNKSILNES) shows a compositional bias: polar residues.

This is an uncharacterized protein from Schizosaccharomyces pombe (strain 972 / ATCC 24843) (Fission yeast).